The chain runs to 430 residues: ATP-dependent RNA helicase RhlB (430 aa).

The Q motif motif lies at 9–37; it reads QKFSDFALHPQVIEALETKGFHNCTPIQA. The 180-residue stretch at 40 to 219 folds into the Helicase ATP-binding domain; that stretch reads LPFTLSGRDV…FENMNNAEYV (180 aa). 53–60 lines the ATP pocket; it reads AQTGTGKT. A DEAD box motif is present at residues 165 to 168; the sequence is DEAD. In terms of domain architecture, Helicase C-terminal spans 245–390; that stretch reads RLLQTLIEEE…VSRYNSDALM (146 aa). The disordered stretch occupies residues 388–430; sequence ALMTDLPPPKRLTRNRSGNGPRRGGNNNRRSSASRSPNRKRSG. Positions 402 to 423 are enriched in low complexity; the sequence is NRSGNGPRRGGNNNRRSSASRS.

This sequence belongs to the DEAD box helicase family. RhlB subfamily. In terms of assembly, component of the RNA degradosome, which is a multiprotein complex involved in RNA processing and mRNA degradation.

The protein resides in the cytoplasm. It catalyses the reaction ATP + H2O = ADP + phosphate + H(+). Its function is as follows. DEAD-box RNA helicase involved in RNA degradation. Has RNA-dependent ATPase activity and unwinds double-stranded RNA. This is ATP-dependent RNA helicase RhlB from Erwinia tasmaniensis (strain DSM 17950 / CFBP 7177 / CIP 109463 / NCPPB 4357 / Et1/99).